Here is a 61-residue protein sequence, read N- to C-terminus: Short neurotoxin 1 (61 aa).

4 cysteine pairs are disulfide-bonded: cysteine 3/cysteine 23, cysteine 17/cysteine 40, cysteine 42/cysteine 53, and cysteine 54/cysteine 59.

This sequence belongs to the three-finger toxin family. Short-chain subfamily. Type I alpha-neurotoxin sub-subfamily. In terms of tissue distribution, expressed by the venom gland.

The protein localises to the secreted. Functionally, binds to muscle nicotinic acetylcholine receptor (nAChR) and inhibit acetylcholine from binding to the receptor, thereby impairing neuromuscular transmission. The polypeptide is Short neurotoxin 1 (Naja samarensis (Peters' cobra)).